Here is a 328-residue protein sequence, read N- to C-terminus: NADH-quinone oxidoreductase subunit H 2 (328 aa).

8 helical membrane-spanning segments follow: residues 3–23 (LIVA…ILLL), 77–97 (FLFK…FAAI), 119–139 (VALL…IFGG), 165–185 (MGFA…LDIV), 191–211 (VWNV…GLAE), 250–270 (MVLV…GVLI), 272–292 (LPPL…FMWF), and 307–327 (IGWK…GVVF).

Belongs to the complex I subunit 1 family. In terms of assembly, NDH-1 is composed of 14 different subunits. Subunits NuoA, H, J, K, L, M, N constitute the membrane sector of the complex.

The protein localises to the cell inner membrane. The catalysed reaction is a quinone + NADH + 5 H(+)(in) = a quinol + NAD(+) + 4 H(+)(out). NDH-1 shuttles electrons from NADH, via FMN and iron-sulfur (Fe-S) centers, to quinones in the respiratory chain. The immediate electron acceptor for the enzyme in this species is believed to be ubiquinone. Couples the redox reaction to proton translocation (for every two electrons transferred, four hydrogen ions are translocated across the cytoplasmic membrane), and thus conserves the redox energy in a proton gradient. This subunit may bind ubiquinone. This Rhizobium meliloti (strain 1021) (Ensifer meliloti) protein is NADH-quinone oxidoreductase subunit H 2.